We begin with the raw amino-acid sequence, 138 residues long: UPF0047 protein MJ1081 (138 aa).

This sequence belongs to the UPF0047 family.

In Methanocaldococcus jannaschii (strain ATCC 43067 / DSM 2661 / JAL-1 / JCM 10045 / NBRC 100440) (Methanococcus jannaschii), this protein is UPF0047 protein MJ1081.